The following is a 477-amino-acid chain: Glycogen synthase (477 aa).

ADP-alpha-D-glucose is bound at residue Lys-15.

This sequence belongs to the glycosyltransferase 1 family. Bacterial/plant glycogen synthase subfamily.

The catalysed reaction is [(1-&gt;4)-alpha-D-glucosyl](n) + ADP-alpha-D-glucose = [(1-&gt;4)-alpha-D-glucosyl](n+1) + ADP + H(+). It functions in the pathway glycan biosynthesis; glycogen biosynthesis. Functionally, synthesizes alpha-1,4-glucan chains using ADP-glucose. This chain is Glycogen synthase, found in Streptococcus pneumoniae serotype 4 (strain ATCC BAA-334 / TIGR4).